Consider the following 711-residue polypeptide: Polyribonucleotide nucleotidyltransferase (711 aa).

The Mg(2+) site is built by Asp-486 and Asp-492. The KH domain occupies 553–612 (PRIHTIKINPDKIKDVIGKGGSVIRALTEETGTTIEIEDDGTVKIAATDGDKAQHAIRRI). The 69-residue stretch at 622 to 690 (GRIYNGKVTR…RQGRVRLSIK (69 aa)) folds into the S1 motif domain. Residues 691 to 711 (EATEQTPSAAAPEAPVAEQGE) form a disordered region. Residues 699–711 (AAAPEAPVAEQGE) show a composition bias toward low complexity.

The protein belongs to the polyribonucleotide nucleotidyltransferase family. As to quaternary structure, component of the RNA degradosome, which is a multiprotein complex involved in RNA processing and mRNA degradation. It depends on Mg(2+) as a cofactor.

Its subcellular location is the cytoplasm. The enzyme catalyses RNA(n+1) + phosphate = RNA(n) + a ribonucleoside 5'-diphosphate. Involved in mRNA degradation. Catalyzes the phosphorolysis of single-stranded polyribonucleotides processively in the 3'- to 5'-direction. This Klebsiella pneumoniae (strain 342) protein is Polyribonucleotide nucleotidyltransferase.